The sequence spans 371 residues: Queuine tRNA-ribosyltransferase (371 aa).

Aspartate 90 functions as the Proton acceptor in the catalytic mechanism. Residues 90–94, aspartate 144, glutamine 188, and glycine 215 contribute to the substrate site; that span reads DSGGF. Positions 246-252 are RNA binding; it reads GVGTPED. The Nucleophile role is filled by aspartate 265. The tract at residues 270 to 274 is RNA binding; important for wobble base 34 recognition; that stretch reads TRNAR. 4 residues coordinate Zn(2+): cysteine 303, cysteine 305, cysteine 308, and histidine 334.

This sequence belongs to the queuine tRNA-ribosyltransferase family. In terms of assembly, homodimer. Within each dimer, one monomer is responsible for RNA recognition and catalysis, while the other monomer binds to the replacement base PreQ1. Requires Zn(2+) as cofactor.

The enzyme catalyses 7-aminomethyl-7-carbaguanine + guanosine(34) in tRNA = 7-aminomethyl-7-carbaguanosine(34) in tRNA + guanine. It participates in tRNA modification; tRNA-queuosine biosynthesis. In terms of biological role, catalyzes the base-exchange of a guanine (G) residue with the queuine precursor 7-aminomethyl-7-deazaguanine (PreQ1) at position 34 (anticodon wobble position) in tRNAs with GU(N) anticodons (tRNA-Asp, -Asn, -His and -Tyr). Catalysis occurs through a double-displacement mechanism. The nucleophile active site attacks the C1' of nucleotide 34 to detach the guanine base from the RNA, forming a covalent enzyme-RNA intermediate. The proton acceptor active site deprotonates the incoming PreQ1, allowing a nucleophilic attack on the C1' of the ribose to form the product. After dissociation, two additional enzymatic reactions on the tRNA convert PreQ1 to queuine (Q), resulting in the hypermodified nucleoside queuosine (7-(((4,5-cis-dihydroxy-2-cyclopenten-1-yl)amino)methyl)-7-deazaguanosine). The sequence is that of Queuine tRNA-ribosyltransferase from Chromobacterium violaceum (strain ATCC 12472 / DSM 30191 / JCM 1249 / CCUG 213 / NBRC 12614 / NCIMB 9131 / NCTC 9757 / MK).